Reading from the N-terminus, the 126-residue chain is Small ribosomal subunit protein uS13 (126 aa).

Residues 96 to 126 (PVRGQRTRTNARTRRGSRRTVAGKKKPAAKK) form a disordered region. Residues 100–126 (QRTRTNARTRRGSRRTVAGKKKPAAKK) are compositionally biased toward basic residues.

The protein belongs to the universal ribosomal protein uS13 family. In terms of assembly, part of the 30S ribosomal subunit. Forms a loose heterodimer with protein S19. Forms two bridges to the 50S subunit in the 70S ribosome.

Located at the top of the head of the 30S subunit, it contacts several helices of the 16S rRNA. In the 70S ribosome it contacts the 23S rRNA (bridge B1a) and protein L5 of the 50S subunit (bridge B1b), connecting the 2 subunits; these bridges are implicated in subunit movement. Contacts the tRNAs in the A and P-sites. In Thermosynechococcus vestitus (strain NIES-2133 / IAM M-273 / BP-1), this protein is Small ribosomal subunit protein uS13.